We begin with the raw amino-acid sequence, 154 residues long: 6,7-dimethyl-8-ribityllumazine synthase (154 aa).

5-amino-6-(D-ribitylamino)uracil contacts are provided by residues phenylalanine 15, 47–49, and 71–73; these read TFD and AVI. A (2S)-2-hydroxy-3-oxobutyl phosphate-binding site is contributed by 76 to 77; it reads ET. Histidine 79 functions as the Proton donor in the catalytic mechanism. Residue leucine 104 participates in 5-amino-6-(D-ribitylamino)uracil binding. Arginine 119 serves as a coordination point for (2S)-2-hydroxy-3-oxobutyl phosphate.

This sequence belongs to the DMRL synthase family.

The catalysed reaction is (2S)-2-hydroxy-3-oxobutyl phosphate + 5-amino-6-(D-ribitylamino)uracil = 6,7-dimethyl-8-(1-D-ribityl)lumazine + phosphate + 2 H2O + H(+). Its pathway is cofactor biosynthesis; riboflavin biosynthesis; riboflavin from 2-hydroxy-3-oxobutyl phosphate and 5-amino-6-(D-ribitylamino)uracil: step 1/2. In terms of biological role, catalyzes the formation of 6,7-dimethyl-8-ribityllumazine by condensation of 5-amino-6-(D-ribitylamino)uracil with 3,4-dihydroxy-2-butanone 4-phosphate. This is the penultimate step in the biosynthesis of riboflavin. This chain is 6,7-dimethyl-8-ribityllumazine synthase, found in Saccharolobus islandicus (strain M.16.27) (Sulfolobus islandicus).